The primary structure comprises 353 residues: Photosystem II D2 protein (353 aa).

Residue threonine 2 is modified to N-acetylthreonine. At threonine 2 the chain carries Phosphothreonine. Residues 41-61 (CAYFALGGWFTGTTFVTSWYT) traverse the membrane as a helical segment. Histidine 118 serves as a coordination point for chlorophyll a. A helical transmembrane segment spans residues 125-141 (GFMLRQFELARSVQLRP). Glutamine 130 and asparagine 143 together coordinate pheophytin a. A helical membrane pass occupies residues 153–166 (VFVSVFLIYPLGQS). Histidine 198 contributes to the chlorophyll a binding site. A helical membrane pass occupies residues 208 to 228 (AALLCAIHGATVENLYFEDGD). The a plastoquinone site is built by histidine 215 and phenylalanine 262. Residue histidine 215 participates in Fe cation binding. Histidine 269 serves as a coordination point for Fe cation. The chain crosses the membrane as a helical span at residues 279 to 295 (GLWMSALGVVGLALNLR).

This sequence belongs to the reaction center PufL/M/PsbA/D family. In terms of assembly, PSII is composed of 1 copy each of membrane proteins PsbA, PsbB, PsbC, PsbD, PsbE, PsbF, PsbH, PsbI, PsbJ, PsbK, PsbL, PsbM, PsbT, PsbX, PsbY, PsbZ, Psb30/Ycf12, at least 3 peripheral proteins of the oxygen-evolving complex and a large number of cofactors. It forms dimeric complexes. Requires The D1/D2 heterodimer binds P680, chlorophylls that are the primary electron donor of PSII, and subsequent electron acceptors. It shares a non-heme iron and each subunit binds pheophytin, quinone, additional chlorophylls, carotenoids and lipids. There is also a Cl(-1) ion associated with D1 and D2, which is required for oxygen evolution. The PSII complex binds additional chlorophylls, carotenoids and specific lipids. as cofactor.

It is found in the plastid. The protein resides in the chloroplast thylakoid membrane. The enzyme catalyses 2 a plastoquinone + 4 hnu + 2 H2O = 2 a plastoquinol + O2. Functionally, photosystem II (PSII) is a light-driven water:plastoquinone oxidoreductase that uses light energy to abstract electrons from H(2)O, generating O(2) and a proton gradient subsequently used for ATP formation. It consists of a core antenna complex that captures photons, and an electron transfer chain that converts photonic excitation into a charge separation. The D1/D2 (PsbA/PsbD) reaction center heterodimer binds P680, the primary electron donor of PSII as well as several subsequent electron acceptors. D2 is needed for assembly of a stable PSII complex. The sequence is that of Photosystem II D2 protein from Panax ginseng (Korean ginseng).